A 510-amino-acid chain; its full sequence is Myosin-binding protein C, cardiac-type (510 aa).

Ig-like C2-type domains follow at residues 177–269 (KKST…VKEP), 270–347 (PYSS…TVKT), and 378–438 (RDQA…SFIP).

The protein belongs to the immunoglobulin superfamily. MyBP family. In terms of tissue distribution, heart.

Its function is as follows. Thick filament-associated protein located in the crossbridge region of vertebrate striated muscle a bands. In vitro it binds MHC, F-actin and native thin filaments, and modifies the activity of actin-activated myosin ATPase. It may modulate muscle contraction or may play a more structural role. The sequence is that of Myosin-binding protein C, cardiac-type from Ambystoma mexicanum (Axolotl).